The primary structure comprises 532 residues: NMDA receptor synaptonuclear signaling and neuronal migration factor (532 aa).

A lipid anchor (N-myristoyl glycine) is attached at Gly2. The interval 2–235 (GAAASRRRAL…FSFQTATTTM (234 aa)) is necessary and sufficient to elicit dendritic processes and synaptic contacts. Disordered stretches follow at residues 34–67 (SQSH…APHN) and 127–174 (RRQR…GCAK). Residues 38 to 48 (PENRNGADHLL) are compositionally biased toward basic and acidic residues. The segment covering 127–139 (RRQRERHPHHHSQ) has biased composition (basic residues). Residues 155 to 164 (PCQSWAGSRQ) show a composition bias toward polar residues. Ser206 carries the post-translational modification Phosphoserine. The Nuclear localization signal signature appears at 247–252 (RKRRKR). The tract at residues 275-315 (RVKAQTFAERRERSFSRSWSDPTPMKADTSHDSRDSSDLQS) is disordered. Phosphoserine is present on residues Ser292 and Ser294. Residues 302-311 (DTSHDSRDSS) are compositionally biased toward basic and acidic residues.

The protein belongs to the NSMF family. As to quaternary structure, interacts with KPNA1; the interaction occurs in a calcium-independent manner after synaptic NMDA receptor stimulation and is required for nuclear import of NSMF but is competed by CABP1. Interacts (via the central NLS-containing motif region) with CABP1 (via EF-hands 1 and 2); the interaction occurs in a calcium-dependent manner after synaptic NMDA receptor stimulation and prevents the nuclear import of NSMF. Cannot be competed by calmodulin. In terms of processing, proteolytically processed after NMDA receptor activation. Cleaved in a calcium-dependent and calpain-sensitive manner. Calpain cleavage is essential for the translocation process from dendrites to the nucleus. As to expression, expressed in the radiatum and pyramidale strata of the hippocampus (at protein level). Strongly expressed in the brain. Expressed in the sensory and motor cortex, hippocampus, olfactory bulb, thalamus and amygdala. In the olfactory bulb expressed in the granular cell layer, mitral cell layer and the glomerular layer. In the hippocampus highly expressed in the regions associated with neuronal cell types as CA1, CA2, CA3 and granule cells of the dentate gyrus. All isoforms have been detected in the molecular layers of the hippocampus.

The protein resides in the nucleus. The protein localises to the nucleus envelope. It is found in the nucleus membrane. It localises to the nucleus matrix. Its subcellular location is the cytoplasm. The protein resides in the cell cortex. The protein localises to the cytoskeleton. It is found in the cell membrane. It localises to the cell projection. Its subcellular location is the dendrite. The protein resides in the synapse. The protein localises to the synaptosome. It is found in the postsynaptic density. It localises to the membrane. Its function is as follows. Couples NMDA-sensitive glutamate receptor signaling to the nucleus and triggers long-lasting changes in the cytoarchitecture of dendrites and spine synapse processes. Part of the cAMP response element-binding protein (CREB) shut-off signaling pathway. Stimulates outgrowth of olfactory axons and migration of gonadotropin-releasing hormone (GnRH) and luteinizing-hormone-releasing hormone (LHRH) neuronal cells. This is NMDA receptor synaptonuclear signaling and neuronal migration factor (Nsmf) from Rattus norvegicus (Rat).